The following is a 147-amino-acid chain: uncharacterized protein (147 aa).

Residues 1–147 form the N-acetyltransferase domain; it reads MEIRRADKDD…RPESGGSGSE (147 aa).

This sequence belongs to the acetyltransferase family.

This is an uncharacterized protein from Archaeoglobus fulgidus (strain ATCC 49558 / DSM 4304 / JCM 9628 / NBRC 100126 / VC-16).